The sequence spans 970 residues: Probable histidine kinase 6 (970 aa).

At 1 to 12 (MGKPEARSGWRN) the chain is on the cytoplasmic side. Residues 13-33 (AAAAAWVLVAVACAAYMHWHL) traverse the membrane as a helical segment. Residues 34 to 306 (RRETMDRAEE…YRQKPPLPWS (273 aa)) lie on the Extracellular side of the membrane. Residues 82–294 (FPSAIDQDTF…GDPFRAHEMR (213 aa)) form the CHASE domain. Residues 307 to 327 (AITNPLGTFVIWMLVGYIICA) traverse the membrane as a helical segment. Topologically, residues 328-970 (AWSRYDKVSE…LVVGTKESAV (643 aa)) are cytoplasmic. The region spanning 362 to 651 (TVSHEIRTPM…TFTFSAVLKR (290 aa)) is the Histidine kinase domain. The residue at position 365 (His-365) is a Phosphohistidine; by autocatalysis. Response regulatory domains are found at residues 676–802 (KAIL…QQLL) and 827–962 (NILI…SRLV). At Asp-877 the chain carries 4-aspartylphosphate.

In terms of processing, activation probably requires a transfer of a phosphate group between a His in the transmitter domain and an Asp of the receiver domain. Highly expressed in spikelets and at lower levels in roots, young leaves, mature leaves and stems.

The protein localises to the cell membrane. It carries out the reaction ATP + protein L-histidine = ADP + protein N-phospho-L-histidine.. Cytokinin receptor related to bacterial two-component regulators. Functions as a histidine kinase and transmits the stress signal to a downstream MAPK cascade. This chain is Probable histidine kinase 6, found in Oryza sativa subsp. japonica (Rice).